The sequence spans 132 residues: Small ribosomal subunit protein uS8 (132 aa).

The protein belongs to the universal ribosomal protein uS8 family. Part of the 30S ribosomal subunit. Contacts proteins S5 and S12.

Functionally, one of the primary rRNA binding proteins, it binds directly to 16S rRNA central domain where it helps coordinate assembly of the platform of the 30S subunit. This is Small ribosomal subunit protein uS8 from Stenotrophomonas maltophilia (strain K279a).